The primary structure comprises 1051 residues: DNA-directed RNA polymerase subunit beta (1051 aa).

It belongs to the RNA polymerase beta chain family. As to quaternary structure, in plastids the minimal PEP RNA polymerase catalytic core is composed of four subunits: alpha, beta, beta', and beta''. When a (nuclear-encoded) sigma factor is associated with the core the holoenzyme is formed, which can initiate transcription (Potential).

It is found in the plastid. It localises to the apicoplast. It catalyses the reaction RNA(n) + a ribonucleoside 5'-triphosphate = RNA(n+1) + diphosphate. Functionally, DNA-dependent RNA polymerase catalyzes the transcription of DNA into RNA using the four ribonucleoside triphosphates as substrates. The polypeptide is DNA-directed RNA polymerase subunit beta (rpoB) (Toxoplasma gondii).